The chain runs to 417 residues: MLEQMGQAAKAASYQMALLSSREKNRVLEKIADYLEANAEEILLANEQDLLEARRSGLSEALLDRLALNPQRLHAIANDVRQVCQLADPVGQVIDGGLLESGLRIERRRVPLGVVGVIYEARPNVTVDVASLCLKTGNAAILRGGKETWRTNAATVKVIQKALEECGLPAAAVQAIESPDRALVSEMLRMDKYIDMLIPRGGAGLHKLCREQSTIPVITGGIGVCHIFVDETAEFAPALNIITNAKTQRPSTCNTVETLLVHEAIAERFLPELSRAMHERGVTLHADARALALLSGGPATAVAVKPEAFDDEWLSLDLNVKLVAGIDEAIAHIREHGTQHSDAILTRTLRHADRFVNEVDSSAVYVNASTRFTDGGQFGLGAEVAVSTQKLHARGPMGLEALTTYKWIGYGDDTIRA.

This sequence belongs to the gamma-glutamyl phosphate reductase family.

It is found in the cytoplasm. It catalyses the reaction L-glutamate 5-semialdehyde + phosphate + NADP(+) = L-glutamyl 5-phosphate + NADPH + H(+). It functions in the pathway amino-acid biosynthesis; L-proline biosynthesis; L-glutamate 5-semialdehyde from L-glutamate: step 2/2. Catalyzes the NADPH-dependent reduction of L-glutamate 5-phosphate into L-glutamate 5-semialdehyde and phosphate. The product spontaneously undergoes cyclization to form 1-pyrroline-5-carboxylate. This Cronobacter sakazakii (strain ATCC BAA-894) (Enterobacter sakazakii) protein is Gamma-glutamyl phosphate reductase.